Consider the following 1755-residue polypeptide: Transposon Ty1-JR2 Gag-Pol polyprotein (1755 aa).

Residues 1-16 (MESQQLSQHSHISHGS) show a composition bias toward low complexity. Disordered stretches follow at residues 1 to 93 (MESQ…MMTQ), 126 to 173 (PQSQ…RPPP), and 352 to 421 (GSRN…SKST). Composition is skewed to polar residues over residues 48–60 (TKAN…TPAS), 71–93 (SPQT…MMTQ), and 127–152 (QSQF…GNTF). Over residues 153–165 (TDSSSADSDMTST) the composition is skewed to low complexity. Residues 299-401 (NNGIHINNKV…NSKSKTARAH (103 aa)) are RNA-binding. Over residues 402–418 (NVSTSNNSPSTDNDSIS) the composition is skewed to low complexity. Position 416 is a phosphoserine (Ser-416). The active-site For protease activity; shared with dimeric partner is the Asp-461. The segment at 583–640 (NVHTSESTRKYPYPFIHRMLAHANAQTIRYSLKNNTITYFNESDVDWSSAIDYQCPDC) is integrase-type zinc finger-like. The 176-residue stretch at 660 to 835 (NSYEPFQYLH…AGLDISTLLP (176 aa)) folds into the Integrase catalytic domain. Mg(2+)-binding residues include Asp-671 and Asp-736. 3 disordered regions span residues 956–1087 (SKAV…ETEK), 1092–1111 (RSPS…NIVP), and 1130–1186 (DLPL…EDNE). Residues 960-969 (SPTDSTPPST) show a composition bias toward low complexity. Polar residues predominate over residues 1005–1015 (STPQISNIEST). Residues 1038 to 1053 (ESSHASKSKDFRHSDS) are compositionally biased toward basic and acidic residues. Polar residues-rich tracts occupy residues 1054–1082 (YSEN…QISD) and 1101–1111 (PENNSSHNIVP). The short motif at 1178–1212 (KKRSLEDNETEIKVSRDTWNTKNMRSLEPPRSKKR) is the Bipartite nuclear localization signal element. Residues 1338 to 1476 (NNYYITQLDI…DILGLEIKYQ (139 aa)) form the Reverse transcriptase Ty1/copia-type domain. Asp-1346, Asp-1427, Asp-1428, Asp-1610, Glu-1652, and Asp-1685 together coordinate Mg(2+). In terms of domain architecture, RNase H Ty1/copia-type spans 1610-1752 (DASYGNQPYY…IKTFKLLTNK (143 aa)).

In terms of assembly, the capsid protein forms a homotrimer, from which the VLPs are assembled. The protease is a homodimer, whose active site consists of two apposed aspartic acid residues. Post-translationally, initially, virus-like particles (VLPs) are composed of the structural unprocessed proteins Gag and Gag-Pol, and also contain the host initiator methionine tRNA (tRNA(i)-Met) which serves as a primer for minus-strand DNA synthesis, and a dimer of genomic Ty RNA. Processing of the polyproteins occurs within the particle and proceeds by an ordered pathway, called maturation. First, the protease (PR) is released by autocatalytic cleavage of the Gag-Pol polyprotein yielding capsid protein p45 and a Pol-p154 precursor protein. This cleavage is a prerequisite for subsequent processing of Pol-p154 at the remaining sites to release the mature structural and catalytic proteins. Maturation takes place prior to the RT reaction and is required to produce transposition-competent VLPs.

The protein resides in the cytoplasm. Its subcellular location is the nucleus. It carries out the reaction DNA(n) + a 2'-deoxyribonucleoside 5'-triphosphate = DNA(n+1) + diphosphate. It catalyses the reaction Endonucleolytic cleavage to 5'-phosphomonoester.. Capsid protein (CA) is the structural component of the virus-like particle (VLP), forming the shell that encapsulates the retrotransposons dimeric RNA genome. The particles are assembled from trimer-clustered units and there are holes in the capsid shells that allow for the diffusion of macromolecules. CA also has nucleocapsid-like chaperone activity, promoting primer tRNA(i)-Met annealing to the multipartite primer-binding site (PBS), dimerization of Ty1 RNA and initiation of reverse transcription. Its function is as follows. The aspartyl protease (PR) mediates the proteolytic cleavages of the Gag and Gag-Pol polyproteins after assembly of the VLP. In terms of biological role, reverse transcriptase/ribonuclease H (RT) is a multifunctional enzyme that catalyzes the conversion of the retro-elements RNA genome into dsDNA within the VLP. The enzyme displays a DNA polymerase activity that can copy either DNA or RNA templates, and a ribonuclease H (RNase H) activity that cleaves the RNA strand of RNA-DNA heteroduplexes during plus-strand synthesis and hydrolyzes RNA primers. The conversion leads to a linear dsDNA copy of the retrotransposon that includes long terminal repeats (LTRs) at both ends. Functionally, integrase (IN) targets the VLP to the nucleus, where a subparticle preintegration complex (PIC) containing at least integrase and the newly synthesized dsDNA copy of the retrotransposon must transit the nuclear membrane. Once in the nucleus, integrase performs the integration of the dsDNA into the host genome. This chain is Transposon Ty1-JR2 Gag-Pol polyprotein (TY1B-JR2), found in Saccharomyces cerevisiae (strain ATCC 204508 / S288c) (Baker's yeast).